A 301-amino-acid polypeptide reads, in one-letter code: Uricase (301 aa).

Active-site charge relay system residues include K11 and T58. 7 residues coordinate urate: T58, D59, F160, R177, V228, Q229, and N255. H257 acts as the Charge relay system in catalysis. The short motif at 299-301 (AKL) is the Microbody targeting signal element.

Belongs to the uricase family.

It localises to the peroxisome. The enzyme catalyses urate + O2 + H2O = 5-hydroxyisourate + H2O2. The protein operates within purine metabolism; urate degradation; (S)-allantoin from urate: step 1/3. Its function is as follows. Catalyzes the oxidation of uric acid to 5-hydroxyisourate, which is further processed to form (S)-allantoin. The chain is Uricase (uaZ) from Emericella nidulans (strain FGSC A4 / ATCC 38163 / CBS 112.46 / NRRL 194 / M139) (Aspergillus nidulans).